Consider the following 280-residue polypeptide: Eukaryotic translation initiation factor 3 subunit F-1 (280 aa).

The region spanning 8 to 138 (VRVHPVVLFQ…LRAYVCIQLG (131 aa)) is the MPN domain.

The protein belongs to the eIF-3 subunit F family. In terms of assembly, component of the eukaryotic translation initiation factor 3 (eIF-3) complex. The eIF-3 complex interacts with pix.

It localises to the cytoplasm. Its function is as follows. Component of the eukaryotic translation initiation factor 3 (eIF-3) complex, which is involved in protein synthesis of a specialized repertoire of mRNAs and, together with other initiation factors, stimulates binding of mRNA and methionyl-tRNAi to the 40S ribosome. The eIF-3 complex specifically targets and initiates translation of a subset of mRNAs involved in cell proliferation. The sequence is that of Eukaryotic translation initiation factor 3 subunit F-1 from Drosophila ananassae (Fruit fly).